The chain runs to 302 residues: Ornithine carbamoyltransferase (302 aa).

Carbamoyl phosphate contacts are provided by residues 52 to 55 (STRT), Q79, R103, and 130 to 133 (HPCQ). Residues N161, D221, and 225–226 (SM) each bind L-ornithine. Carbamoyl phosphate is bound by residues 261-262 (CL) and R289.

This sequence belongs to the aspartate/ornithine carbamoyltransferase superfamily. OTCase family.

The protein resides in the cytoplasm. It catalyses the reaction carbamoyl phosphate + L-ornithine = L-citrulline + phosphate + H(+). It functions in the pathway amino-acid biosynthesis; L-arginine biosynthesis; L-arginine from L-ornithine and carbamoyl phosphate: step 1/3. In terms of biological role, reversibly catalyzes the transfer of the carbamoyl group from carbamoyl phosphate (CP) to the N(epsilon) atom of ornithine (ORN) to produce L-citrulline. This is Ornithine carbamoyltransferase from Syntrophotalea carbinolica (strain DSM 2380 / NBRC 103641 / GraBd1) (Pelobacter carbinolicus).